We begin with the raw amino-acid sequence, 255 residues long: Small ribosomal subunit protein uS2 (255 aa).

Belongs to the universal ribosomal protein uS2 family.

This chain is Small ribosomal subunit protein uS2, found in Streptococcus thermophilus (strain CNRZ 1066).